Consider the following 330-residue polypeptide: D-lactate dehydrogenase (330 aa).

NAD(+)-binding positions include 156-157, Asp176, 206-207, 233-235, and Asp259; these read RI, VP, and AAR. Arg235 is a catalytic residue. The active site involves Glu264. His296 acts as the Proton donor in catalysis.

This sequence belongs to the D-isomer specific 2-hydroxyacid dehydrogenase family.

It carries out the reaction (R)-lactate + NAD(+) = pyruvate + NADH + H(+). The chain is D-lactate dehydrogenase (ldhD) from Staphylococcus epidermidis (strain ATCC 35984 / DSM 28319 / BCRC 17069 / CCUG 31568 / BM 3577 / RP62A).